The primary structure comprises 570 residues: Formate--tetrahydrofolate ligase (570 aa).

65 to 72 (TPLGEGKT) serves as a coordination point for ATP.

It belongs to the formate--tetrahydrofolate ligase family.

It catalyses the reaction (6S)-5,6,7,8-tetrahydrofolate + formate + ATP = (6R)-10-formyltetrahydrofolate + ADP + phosphate. It participates in one-carbon metabolism; tetrahydrofolate interconversion. This chain is Formate--tetrahydrofolate ligase, found in Herpetosiphon aurantiacus (strain ATCC 23779 / DSM 785 / 114-95).